A 260-amino-acid polypeptide reads, in one-letter code: Large ribosomal subunit protein uL30 (260 aa).

N-acetylmethionine is present on Met-1. Repeat copies occupy residues 7–18, 19–30, 31–42, 43–54, and 55–66. A 5 X 12 AA tandem repeats region spans residues 7-66; it reads KKKKVAAALGTLKKKKVPAVPETLKKKRRNFAELKVKRLRKKFALKTLRKARRKLIYEKA. Thr-29 is subject to Phosphothreonine. N6-acetyllysine is present on Lys-136. Lys-139 is subject to N6-succinyllysine. At Tyr-151 the chain carries Phosphotyrosine.

This sequence belongs to the universal ribosomal protein uL30 family. In terms of assembly, component of the large ribosomal subunit. Homodimer. Interacts with DHX33.

It localises to the cytoplasm. Component of the large ribosomal subunit. The ribosome is a large ribonucleoprotein complex responsible for the synthesis of proteins in the cell. Binds to G-rich structures in 28S rRNA and in mRNAs. Plays a regulatory role in the translation apparatus; inhibits cell-free translation of mRNAs. In Rattus norvegicus (Rat), this protein is Large ribosomal subunit protein uL30 (Rpl7).